A 447-amino-acid chain; its full sequence is Tol-Pal system protein TolB (447 aa).

The first 29 residues, 1-29 (MITMSRIRSLAAFAVFVILGVAAVLPAQA), serve as a signal peptide directing secretion.

The protein belongs to the TolB family. In terms of assembly, the Tol-Pal system is composed of five core proteins: the inner membrane proteins TolA, TolQ and TolR, the periplasmic protein TolB and the outer membrane protein Pal. They form a network linking the inner and outer membranes and the peptidoglycan layer.

It localises to the periplasm. In terms of biological role, part of the Tol-Pal system, which plays a role in outer membrane invagination during cell division and is important for maintaining outer membrane integrity. This Paramagnetospirillum magneticum (strain ATCC 700264 / AMB-1) (Magnetospirillum magneticum) protein is Tol-Pal system protein TolB.